We begin with the raw amino-acid sequence, 633 residues long: Extracellular metalloproteinase 3 (633 aa).

Residues 1 to 18 (MHGLLLAGLLALPMNVLA) form the signal peptide. A propeptide spanning residues 19-246 (HPAEQHASNV…VHNVVDYVAS (228 aa)) is cleaved from the precursor. Residue Asn410 is glycosylated (N-linked (GlcNAc...) asparagine). Residue His429 coordinates Zn(2+). Glu430 is an active-site residue. Residue His433 coordinates Zn(2+). N-linked (GlcNAc...) asparagine glycans are attached at residues Asn480 and Asn622.

This sequence belongs to the peptidase M36 family. Zn(2+) serves as cofactor.

The protein localises to the secreted. In terms of biological role, secreted metalloproteinase probably acting as a virulence factor. This chain is Extracellular metalloproteinase 3 (MEP3), found in Arthroderma benhamiae (Trichophyton mentagrophytes).